A 201-amino-acid chain; its full sequence is IMP cyclohydrolase (201 aa).

It belongs to the archaeal IMP cyclohydrolase family.

It catalyses the reaction IMP + H2O = 5-formamido-1-(5-phospho-D-ribosyl)imidazole-4-carboxamide. The protein operates within purine metabolism; IMP biosynthesis via de novo pathway; IMP from 5-formamido-1-(5-phospho-D-ribosyl)imidazole-4-carboxamide: step 1/1. Functionally, catalyzes the cyclization of 5-formylamidoimidazole-4-carboxamide ribonucleotide to IMP. The protein is IMP cyclohydrolase of Methanococcus maripaludis (strain C7 / ATCC BAA-1331).